The chain runs to 89 residues: Small ribosomal subunit protein uS15 (89 aa).

It belongs to the universal ribosomal protein uS15 family. As to quaternary structure, part of the 30S ribosomal subunit. Forms a bridge to the 50S subunit in the 70S ribosome, contacting the 23S rRNA.

One of the primary rRNA binding proteins, it binds directly to 16S rRNA where it helps nucleate assembly of the platform of the 30S subunit by binding and bridging several RNA helices of the 16S rRNA. Functionally, forms an intersubunit bridge (bridge B4) with the 23S rRNA of the 50S subunit in the ribosome. The polypeptide is Small ribosomal subunit protein uS15 (Shewanella sediminis (strain HAW-EB3)).